A 223-amino-acid chain; its full sequence is Ribose-5-phosphate isomerase A (223 aa).

Residues 26–29, 82–85, and 95–98 contribute to the substrate site; these read TGST, DGAD, and KGGG. The Proton acceptor role is filled by glutamate 104. Lysine 122 lines the substrate pocket.

The protein belongs to the ribose 5-phosphate isomerase family. In terms of assembly, homodimer.

The enzyme catalyses aldehydo-D-ribose 5-phosphate = D-ribulose 5-phosphate. It participates in carbohydrate degradation; pentose phosphate pathway; D-ribose 5-phosphate from D-ribulose 5-phosphate (non-oxidative stage): step 1/1. Functionally, catalyzes the reversible conversion of ribose-5-phosphate to ribulose 5-phosphate. The chain is Ribose-5-phosphate isomerase A from Streptococcus agalactiae serotype III (strain NEM316).